Consider the following 78-residue polypeptide: Acyl carrier protein (78 aa).

The Carrier domain maps to 2–77; sequence SDTEERVKKI…DAVKFIDKAS (76 aa). S37 carries the post-translational modification O-(pantetheine 4'-phosphoryl)serine.

The protein belongs to the acyl carrier protein (ACP) family. In terms of processing, 4'-phosphopantetheine is transferred from CoA to a specific serine of apo-ACP by AcpS. This modification is essential for activity because fatty acids are bound in thioester linkage to the sulfhydryl of the prosthetic group.

Its subcellular location is the cytoplasm. Its pathway is lipid metabolism; fatty acid biosynthesis. Carrier of the growing fatty acid chain in fatty acid biosynthesis. In Bartonella bacilliformis (strain ATCC 35685 / KC583 / Herrer 020/F12,63), this protein is Acyl carrier protein.